We begin with the raw amino-acid sequence, 105 residues long: DNA-directed RNA polymerases I and III subunit RPAC2 (105 aa).

Belongs to the archaeal Rpo11/eukaryotic RPB11/RPC19 RNA polymerase subunit family. As to quaternary structure, component of the RNA polymerase I (Pol I) and RNA polymerase III (Pol III) complexes consisting of at least 13 and 17 subunits, respectively.

Its subcellular location is the nucleus. In terms of biological role, DNA-dependent RNA polymerase catalyzes the transcription of DNA into RNA using the four ribonucleoside triphosphates as substrates. Common core component of RNA polymerases I and III which synthesize ribosomal RNA precursors and small RNAs, such as 5S rRNA and tRNAs, respectively. This Drosophila melanogaster (Fruit fly) protein is DNA-directed RNA polymerases I and III subunit RPAC2.